A 145-amino-acid chain; its full sequence is Putative antiporter subunit mnhG2 (145 aa).

The next 3 helical transmembrane spans lie at 11–31, 51–71, and 72–92; these read IAAVMLLLGSFIALISAIGIV, VLLTLIGVLIYFIVNTGFFSV, and RLLLSLVFINLTSPVGMHLVA.

It belongs to the CPA3 antiporters (TC 2.A.63) subunit G family. In terms of assembly, may form a heterooligomeric complex that consists of seven subunits: mnhA2, mnhB2, mnhC2, mnhD2, mnhE2, mnhF2 and mnhG2.

The protein resides in the cell membrane. The sequence is that of Putative antiporter subunit mnhG2 (mnhG2) from Staphylococcus aureus (strain MRSA252).